The primary structure comprises 152 residues: D-aminoacyl-tRNA deacylase (152 aa).

The Gly-cisPro motif, important for rejection of L-amino acids signature appears at 142-143; sequence GP.

The protein belongs to the DTD family. As to quaternary structure, homodimer.

It is found in the cytoplasm. It catalyses the reaction glycyl-tRNA(Ala) + H2O = tRNA(Ala) + glycine + H(+). The enzyme catalyses a D-aminoacyl-tRNA + H2O = a tRNA + a D-alpha-amino acid + H(+). An aminoacyl-tRNA editing enzyme that deacylates mischarged D-aminoacyl-tRNAs. Also deacylates mischarged glycyl-tRNA(Ala), protecting cells against glycine mischarging by AlaRS. Acts via tRNA-based rather than protein-based catalysis; rejects L-amino acids rather than detecting D-amino acids in the active site. By recycling D-aminoacyl-tRNA to D-amino acids and free tRNA molecules, this enzyme counteracts the toxicity associated with the formation of D-aminoacyl-tRNA entities in vivo and helps enforce protein L-homochirality. The sequence is that of D-aminoacyl-tRNA deacylase from Paraburkholderia phytofirmans (strain DSM 17436 / LMG 22146 / PsJN) (Burkholderia phytofirmans).